The chain runs to 475 residues: Putative aldehyde dehydrogenase SERP1729 (475 aa).

Position 201–207 (201–207 (GDGSGVG)) interacts with NAD(+). Residues Glu245 and Cys279 contribute to the active site.

This sequence belongs to the aldehyde dehydrogenase family.

It carries out the reaction an aldehyde + NAD(+) + H2O = a carboxylate + NADH + 2 H(+). The sequence is that of Putative aldehyde dehydrogenase SERP1729 from Staphylococcus epidermidis (strain ATCC 35984 / DSM 28319 / BCRC 17069 / CCUG 31568 / BM 3577 / RP62A).